The chain runs to 376 residues: Palmitoyl-[acyl-carrier-protein] 4-desaturase 2, chloroplastic (376 aa).

Residues 1–33 (MELHLALRASPLPAADPGRRPPPPRGNFATNCT) constitute a chloroplast transit peptide. Residues Glu114, Glu149, His152, Glu202, Glu235, and His238 each coordinate Fe cation.

This sequence belongs to the fatty acid desaturase type 2 family. In terms of assembly, homodimer. Requires Fe(2+) as cofactor. As to expression, preferentially expressed in the flower labellum.

The protein resides in the plastid. The protein localises to the chloroplast stroma. It carries out the reaction hexadecanoyl-[ACP] + 2 reduced [2Fe-2S]-[ferredoxin] + O2 + 2 H(+) = (4Z)-hexadecenoyl-[ACP] + 2 oxidized [2Fe-2S]-[ferredoxin] + 2 H2O. The enzyme catalyses octadecanoyl-[ACP] + 2 reduced [2Fe-2S]-[ferredoxin] + O2 + 2 H(+) = (9Z)-octadecenoyl-[ACP] + 2 oxidized [2Fe-2S]-[ferredoxin] + 2 H2O. The protein operates within lipid metabolism; fatty acid metabolism. In terms of biological role, converts stearoyl-ACP to oleoyl-ACP by introduction of a cis double bond between carbons 9 and 10 of the acyl chain. Converts palmitoyl-ACP to (4Z)-hexadec-4-enoyl-ACP by introduction of a cis double bond between carbons 4 and 5 of the acyl chain. Catalyzes the desaturation of saturated fatty acid 18:0 and 16:0 to generate 18:1 (delta-9) and 16:1 (delta-4) intermediates, expected to give rise to 9-alkenes and 12-alkenes, respectively. The chain is Palmitoyl-[acyl-carrier-protein] 4-desaturase 2, chloroplastic (SAD2) from Ophrys sphegodes (Early spider orchid).